Consider the following 122-residue polypeptide: UPF0102 protein cgR_1859 (122 aa).

The protein belongs to the UPF0102 family.

The protein is UPF0102 protein cgR_1859 of Corynebacterium glutamicum (strain R).